Consider the following 348-residue polypeptide: 4-hydroxy-2-oxovalerate aldolase (348 aa).

The Pyruvate carboxyltransferase domain occupies 9–261 (ITVHDMTLRD…RTGVDVWKIQ (253 aa)). A substrate-binding site is contributed by 17–18 (RD). Asp18 lines the Mn(2+) pocket. Residue His21 is the Proton acceptor of the active site. Substrate contacts are provided by Ser171 and His200. His200 and His202 together coordinate Mn(2+). Tyr291 is a binding site for substrate.

It belongs to the 4-hydroxy-2-oxovalerate aldolase family.

The enzyme catalyses (S)-4-hydroxy-2-oxopentanoate = acetaldehyde + pyruvate. This Ralstonia pickettii (strain 12J) protein is 4-hydroxy-2-oxovalerate aldolase.